The following is an 834-amino-acid chain: Leucine--tRNA ligase (834 aa).

Residues 36–46 carry the 'HIGH' region motif; that stretch reads PYPSGKIHVGH. Residues 602–606 carry the 'KMSKS' region motif; that stretch reads KMSKS. Residue Lys-605 coordinates ATP.

It belongs to the class-I aminoacyl-tRNA synthetase family.

Its subcellular location is the cytoplasm. It carries out the reaction tRNA(Leu) + L-leucine + ATP = L-leucyl-tRNA(Leu) + AMP + diphosphate. In Rickettsia canadensis (strain McKiel), this protein is Leucine--tRNA ligase.